Consider the following 622-residue polypeptide: 1,4-alpha-glucan branching enzyme GlgB (622 aa).

Aspartate 300 (nucleophile) is an active-site residue. Catalysis depends on glutamate 351, which acts as the Proton donor.

This sequence belongs to the glycosyl hydrolase 13 family. GlgB subfamily. As to quaternary structure, monomer.

The enzyme catalyses Transfers a segment of a (1-&gt;4)-alpha-D-glucan chain to a primary hydroxy group in a similar glucan chain.. It participates in glycan biosynthesis; glycogen biosynthesis. In terms of biological role, catalyzes the formation of the alpha-1,6-glucosidic linkages in glycogen by scission of a 1,4-alpha-linked oligosaccharide from growing alpha-1,4-glucan chains and the subsequent attachment of the oligosaccharide to the alpha-1,6 position. The polypeptide is 1,4-alpha-glucan branching enzyme GlgB (Streptococcus agalactiae serotype V (strain ATCC BAA-611 / 2603 V/R)).